Here is a 235-residue protein sequence, read N- to C-terminus: Uridylate kinase (235 aa).

9–12 (KLSG) contacts ATP. Residue G51 coordinates UMP. G52 and R56 together coordinate ATP. UMP is bound by residues D71 and 132 to 139 (TGNPYFTT). Residues T159, Y165, and D168 each contribute to the ATP site.

It belongs to the UMP kinase family. As to quaternary structure, homohexamer.

The protein localises to the cytoplasm. The enzyme catalyses UMP + ATP = UDP + ADP. The protein operates within pyrimidine metabolism; CTP biosynthesis via de novo pathway; UDP from UMP (UMPK route): step 1/1. With respect to regulation, inhibited by UTP. In terms of biological role, catalyzes the reversible phosphorylation of UMP to UDP. The protein is Uridylate kinase of Christiangramia forsetii (strain DSM 17595 / CGMCC 1.15422 / KT0803) (Gramella forsetii).